The following is a 695-amino-acid chain: MHLKLYWKLQKKERPLEVSRDTLRTPMSHGKANGDVKARASYMKPTVLPSASLVKASSRKPFGILSPNVLCSMSGKSPVENSLNVKAKKNVLSAAVHQSEEGLPGTWAIVKPGNTKEKIAFFAAHQYSNRIGSMKIKSSWDIDGRATKRRKKSGDLKKAKLQLEMMREINSQCYQSEPFVCGVEHCSVHYMSDSGDGVCAARPLSVIQMVAFLEQKATALLASCTKNCTNSPAIVKISGQSRGIPPAPEPFSAPETCEEPKEQENPETGRSQGEPVRVLDMVARLESECLKHQGQREPGSLSRNNSFRRNVGRVLLTNGSQASDKSEEGSADTADPQENPLQPVSVGEEPSVTEHHSVGEQAWDGTSQSCPSLPATVSFHMDSTDLEPGQQTAMKSCSRDDVEMVEEFDELPTDAVRRIRRELVTVTKHSPEQRQDPLCISITVCTVEKDRPAALDSLEEPLPGMLFFLSSGQDQQAHPQLREHPAPEASEASQPQDAAEGSSAGEEKDASVEPLLPAASPGGSTSQVLEAATCKKQVSQDFLETRFKIQQLLEPQQYMACLPHHIIVKIFRLLPTLSLAILKCTCRYFKSIIEYYNIRPADSRWVRDPRYREDPCKQCKKKYVKGDVSLCRWHPKPYCQALPYGPGYWMCCHQSQKGFPGCKLGLHDNHWLPACHSFNRAIHKKTRGSETEEEY.

Disordered regions lie at residues 239-275, 316-373, and 472-524; these read GQSRGIPPAPEPFSAPETCEEPKEQENPETGRSQGEP, LTNG…CPSL, and GQDQ…PGGS. Positions 556–608 constitute an F-box domain; it reads QQYMACLPHHIIVKIFRLLPTLSLAILKCTCRYFKSIIEYYNIRPADSRWVRD.

Directly interacts with SKP1 and CUL1.

Its function is as follows. Substrate-recognition component of the SCF (SKP1-CUL1-F-box protein)-type E3 ubiquitin ligase complex. The sequence is that of F-box only protein 34 (Fbxo34) from Mus musculus (Mouse).